A 183-amino-acid chain; its full sequence is ATP-dependent protease subunit HslV (183 aa).

The active site involves Thr-13. Gly-168, Cys-171, and Thr-174 together coordinate Na(+).

Belongs to the peptidase T1B family. HslV subfamily. In terms of assembly, a double ring-shaped homohexamer of HslV is capped on each side by a ring-shaped HslU homohexamer. The assembly of the HslU/HslV complex is dependent on binding of ATP.

It localises to the cytoplasm. It carries out the reaction ATP-dependent cleavage of peptide bonds with broad specificity.. Allosterically activated by HslU binding. Functionally, protease subunit of a proteasome-like degradation complex believed to be a general protein degrading machinery. The chain is ATP-dependent protease subunit HslV from Xylella fastidiosa (strain M23).